The sequence spans 41 residues: Cytochrome b559 subunit beta (41 aa).

The chain crosses the membrane as a helical span at residues 16–32 (WLAVHALAIPTVFFLGS). His-20 lines the heme pocket.

The protein belongs to the PsbE/PsbF family. As to quaternary structure, heterodimer of an alpha subunit and a beta subunit. PSII is composed of 1 copy each of membrane proteins PsbA, PsbB, PsbC, PsbD, PsbE, PsbF, PsbH, PsbI, PsbJ, PsbK, PsbL, PsbM, PsbT, PsbY, PsbZ, Psb30/Ycf12, at least 3 peripheral proteins of the oxygen-evolving complex and a large number of cofactors. It forms dimeric complexes. Requires heme b as cofactor.

The protein localises to the plastid. Its subcellular location is the chloroplast thylakoid membrane. This b-type cytochrome is tightly associated with the reaction center of photosystem II (PSII). PSII is a light-driven water:plastoquinone oxidoreductase that uses light energy to abstract electrons from H(2)O, generating O(2) and a proton gradient subsequently used for ATP formation. It consists of a core antenna complex that captures photons, and an electron transfer chain that converts photonic excitation into a charge separation. In Euglena gracilis, this protein is Cytochrome b559 subunit beta.